A 57-amino-acid chain; its full sequence is MAVQQNKPTRSKRGMRRSHDALTAVTSLSVDKTSGEKHLRHHITADGFYRGRKVIAK.

Positions 1–37 are disordered; the sequence is MAVQQNKPTRSKRGMRRSHDALTAVTSLSVDKTSGEK.

This sequence belongs to the bacterial ribosomal protein bL32 family.

The chain is Large ribosomal subunit protein bL32 from Escherichia fergusonii (strain ATCC 35469 / DSM 13698 / CCUG 18766 / IAM 14443 / JCM 21226 / LMG 7866 / NBRC 102419 / NCTC 12128 / CDC 0568-73).